The primary structure comprises 431 residues: Histidine--tRNA ligase (431 aa).

Belongs to the class-II aminoacyl-tRNA synthetase family.

The protein localises to the cytoplasm. The enzyme catalyses tRNA(His) + L-histidine + ATP = L-histidyl-tRNA(His) + AMP + diphosphate + H(+). The polypeptide is Histidine--tRNA ligase (hisS) (Pyrococcus horikoshii (strain ATCC 700860 / DSM 12428 / JCM 9974 / NBRC 100139 / OT-3)).